The sequence spans 433 residues: Ribosome biogenesis protein WDR12 homolog (433 aa).

Residue M1 is modified to N-acetylmethionine. Residues 12-96 (LHVKFVTKLD…ERTLEIEYIR (85 aa)) form a ubiquitin-like (UBL) domain region. WD repeat units lie at residues 108 to 146 (LHDD…SHIL), 148 to 191 (GHSG…SVDS), 203 to 242 (GHKA…SEGE), 270 to 308 (GHTQ…DSLN), 310 to 350 (FCGK…TSAP), 356 to 396 (SHSS…PLSV), and 399 to 433 (THND…IAIS). Residues 238-263 (TSEGESVSVKKRKGNNQAEESQSEGE) form a disordered region.

The protein belongs to the WD repeat WDR12/YTM1 family. As to quaternary structure, interacts with PES. Interacts with BOP1.

Its subcellular location is the nucleus. It is found in the nucleolus. The protein localises to the nucleoplasm. Its function is as follows. Required for maturation of ribosomal RNAs and formation of the large ribosomal subunit. The sequence is that of Ribosome biogenesis protein WDR12 homolog from Arabidopsis thaliana (Mouse-ear cress).